The following is a 426-amino-acid chain: 4-hydroxy-3-methylbut-2-en-1-yl diphosphate synthase (flavodoxin) (426 aa).

[4Fe-4S] cluster is bound by residues C310, C313, C356, and E363.

It belongs to the IspG family. The cofactor is [4Fe-4S] cluster.

It carries out the reaction (2E)-4-hydroxy-3-methylbut-2-enyl diphosphate + oxidized [flavodoxin] + H2O + 2 H(+) = 2-C-methyl-D-erythritol 2,4-cyclic diphosphate + reduced [flavodoxin]. It participates in isoprenoid biosynthesis; isopentenyl diphosphate biosynthesis via DXP pathway; isopentenyl diphosphate from 1-deoxy-D-xylulose 5-phosphate: step 5/6. Functionally, converts 2C-methyl-D-erythritol 2,4-cyclodiphosphate (ME-2,4cPP) into 1-hydroxy-2-methyl-2-(E)-butenyl 4-diphosphate. In Rhodopseudomonas palustris (strain BisA53), this protein is 4-hydroxy-3-methylbut-2-en-1-yl diphosphate synthase (flavodoxin).